The sequence spans 37 residues: Large ribosomal subunit protein bL36 (37 aa).

Belongs to the bacterial ribosomal protein bL36 family.

This chain is Large ribosomal subunit protein bL36, found in Mycoplasma pneumoniae (strain ATCC 29342 / M129 / Subtype 1) (Mycoplasmoides pneumoniae).